A 529-amino-acid chain; its full sequence is Tyrosinase (529 aa).

Residues 1–18 (MLLAALCCLLWSFRTSAG) form the signal peptide. Residues 19-472 (HFPRACASSK…IKPFLEQASR (454 aa)) lie on the Lumenal side of the membrane. N-linked (GlcNAc...) asparagine glycans are attached at residues asparagine 86, asparagine 111, and asparagine 161. Residues histidine 180, histidine 202, and histidine 211 each coordinate Cu cation. N-linked (GlcNAc...) asparagine glycosylation is found at asparagine 230 and asparagine 336. Residues histidine 362 and histidine 366 each coordinate Cu cation. A glycan (N-linked (GlcNAc...) asparagine) is linked at asparagine 370. Histidine 389 is a Cu cation binding site. A helical transmembrane segment spans residues 473-495 (IWPWLIGAAVVGSVLTAVLGRLT). Over 496–529 (SLLCRRKRKQLREERQPLLMEKEDYHSLLYQTHV) the chain is Cytoplasmic.

This sequence belongs to the tyrosinase family. In terms of assembly, forms an OPN3-dependent complex with DCT in response to blue light in melanocytes. Requires Cu(2+) as cofactor. In terms of processing, glycosylated.

The protein resides in the melanosome membrane. The protein localises to the melanosome. The enzyme catalyses 2 L-dopa + O2 = 2 L-dopaquinone + 2 H2O. It catalyses the reaction L-tyrosine + O2 = L-dopaquinone + H2O. The catalysed reaction is 2 5,6-dihydroxyindole-2-carboxylate + O2 = 2 indole-5,6-quinone-2-carboxylate + 2 H2O. This is a copper-containing oxidase that functions in the formation of pigments such as melanins and other polyphenolic compounds. Catalyzes the initial and rate limiting step in the cascade of reactions leading to melanin production from tyrosine. In addition to hydroxylating tyrosine to DOPA (3,4-dihydroxyphenylalanine), also catalyzes the oxidation of DOPA to DOPA-quinone, and possibly the oxidation of DHI (5,6-dihydroxyindole) to indole-5,6 quinone. The polypeptide is Tyrosinase (TYR) (Felis catus (Cat)).